Here is a 355-residue protein sequence, read N- to C-terminus: 3-dehydroquinate synthase (355 aa).

NAD(+) contacts are provided by residues 105-109, 129-130, lysine 142, lysine 151, and 169-172; these read GVVGD, TS, and TLKT. Positions 184, 246, and 263 each coordinate Zn(2+).

The protein belongs to the sugar phosphate cyclases superfamily. Dehydroquinate synthase family. Requires NAD(+) as cofactor. Co(2+) is required as a cofactor. Zn(2+) serves as cofactor.

The protein resides in the cytoplasm. It catalyses the reaction 7-phospho-2-dehydro-3-deoxy-D-arabino-heptonate = 3-dehydroquinate + phosphate. It participates in metabolic intermediate biosynthesis; chorismate biosynthesis; chorismate from D-erythrose 4-phosphate and phosphoenolpyruvate: step 2/7. Catalyzes the conversion of 3-deoxy-D-arabino-heptulosonate 7-phosphate (DAHP) to dehydroquinate (DHQ). The polypeptide is 3-dehydroquinate synthase (Streptococcus agalactiae serotype III (strain NEM316)).